The chain runs to 330 residues: Mas-related G-protein coupled receptor member X2 (330 aa).

Residues Met1–Leu33 are Extracellular-facing. Residues Val34–Leu54 traverse the membrane as a helical segment. Topologically, residues Leu55 to Ala63 are cytoplasmic. The chain crosses the membrane as a helical span at residues Phe64 to Ile84. Residues Asn85–Ser96 are Extracellular-facing. Residues Ile97 to Leu117 traverse the membrane as a helical segment. Over Ser118–His144 the chain is Cytoplasmic. Residues Leu145 to Gly165 form a helical membrane-spanning segment. Residues Lys166–Asp184 lie on the Extracellular side of the membrane. The chain crosses the membrane as a helical span at residues Phe185–Leu205. Residues Leu206 to Thr228 lie on the Cytoplasmic side of the membrane. Residues Val229–Ile249 form a helical membrane-spanning segment. Residues Trp250–Ser264 are Extracellular-facing. Residues Val265 to Phe285 form a helical membrane-spanning segment. The Cytoplasmic portion of the chain corresponds to Arg286–Val330.

The protein belongs to the G-protein coupled receptor 1 family. Mas subfamily.

It is found in the cell membrane. Its function is as follows. Mast cell-specific receptor for basic secretagogues, i.e. cationic amphiphilic drugs, as well as endo- or exogenous peptides, consisting of a basic head group and a hydrophobic core. Recognizes and binds small molecules containing a cyclized tetrahydroisoquinoline (THIQ), such as non-steroidal neuromuscular blocking drugs (NMBDs), including tubocurarine and atracurium. In response to these compounds, mediates pseudo-allergic reactions characterized by histamine release, inflammation and airway contraction. The polypeptide is Mas-related G-protein coupled receptor member X2 (MRGPRX2) (Trachypithecus francoisi (Francois' leaf monkey)).